The chain runs to 425 residues: Trigger factor (425 aa).

A PPIase FKBP-type domain is found at 163–248 (GDTAVIDFEG…VHEIKTKELP (86 aa)).

The protein belongs to the FKBP-type PPIase family. Tig subfamily.

The protein localises to the cytoplasm. The enzyme catalyses [protein]-peptidylproline (omega=180) = [protein]-peptidylproline (omega=0). Its function is as follows. Involved in protein export. Acts as a chaperone by maintaining the newly synthesized protein in an open conformation. Functions as a peptidyl-prolyl cis-trans isomerase. The protein is Trigger factor of Bacillus cereus (strain Q1).